A 261-amino-acid chain; its full sequence is Carbonic anhydrase 1 (261 aa).

The disordered stretch occupies residues Met1–Lys40. N-acetylalanine is present on Ala2. An Alpha-carbonic anhydrase domain is found at Pro4–Phe261. His65 (proton donor/acceptor) is an active-site residue. Zn(2+) is bound by residues His95, His97, and His120. Residues Thr200 and Thr200–His201 each bind substrate. Positions Pro241–Phe261 are disordered.

It belongs to the alpha-carbonic anhydrase family. It depends on Zn(2+) as a cofactor.

The protein localises to the cytoplasm. It carries out the reaction hydrogencarbonate + H(+) = CO2 + H2O. The enzyme catalyses urea = cyanamide + H2O. Inhibited by acetazolamide. Functionally, catalyzes the reversible hydration of carbon dioxide. Can hydrate cyanamide to urea. The polypeptide is Carbonic anhydrase 1 (CA1) (Pan troglodytes (Chimpanzee)).